Here is a 229-residue protein sequence, read N- to C-terminus: Large ribosomal subunit protein uL1 (229 aa).

The protein belongs to the universal ribosomal protein uL1 family. As to quaternary structure, part of the 50S ribosomal subunit.

Functionally, binds directly to 23S rRNA. The L1 stalk is quite mobile in the ribosome, and is involved in E site tRNA release. Protein L1 is also a translational repressor protein, it controls the translation of the L11 operon by binding to its mRNA. The chain is Large ribosomal subunit protein uL1 from Desulforamulus reducens (strain ATCC BAA-1160 / DSM 100696 / MI-1) (Desulfotomaculum reducens).